The chain runs to 1190 residues: Plakophilin-4 (1190 aa).

The disordered stretch occupies residues M1–T32. Positions T36–A63 form a coiled coil. The tract at residues A73–Q347 is disordered. S75 carries the post-translational modification Phosphoserine. Polar residues predominate over residues S77–K86. T84 carries the post-translational modification Phosphothreonine. Phosphoserine is present on residues S106, S132, S136, and S139. Polar residues-rich tracts occupy residues G138–G156, F163–V203, and S213–V229. S220, S230, and S235 each carry phosphoserine. Residues S230–G241 show a composition bias toward low complexity. Residues P247–P266 are compositionally biased toward polar residues. Omega-N-methylarginine occurs at positions 253 and 269. 5 positions are modified to phosphoserine: S272, S280, S313, S326, and S336. The span at S289–R323 shows a compositional bias: polar residues. Residues V324 to P337 show a composition bias toward low complexity. At Y371 the chain carries Phosphotyrosine. Residues S391, S402, and S405 each carry the phosphoserine modification. A Phosphothreonine modification is found at T411. The residue at position 414 (Y414) is a Phosphotyrosine. 3 positions are modified to phosphoserine: S421, S426, and S437. Position 477 is a phosphotyrosine (Y477). Phosphoserine occurs at positions 509, 511, and 514. ARM repeat units follow at residues K517–F556, N559–F598, and D603–S643. Positions G772–E781 are enriched in basic and acidic residues. Residues G772–G809 are disordered. S775 bears the Phosphoserine mark. The ARM 4 repeat unit spans residues A861–L900. Phosphothreonine is present on residues T1012 and T1016. A phosphoserine mark is found at S1044, S1090, S1099, and S1133.

The protein belongs to the beta-catenin family. In terms of assembly, interacts (via the C-terminus) with FRMPD2 (via the PDZ 2 domain). Interacts with PDZD2. Interacts with RHOA; the interaction is detected at the midbody. Interacts with ECT2; the interaction is detected at the midbody. Interacts with CCDC85B.

The protein localises to the cell junction. Its subcellular location is the desmosome. It localises to the cytoplasm. It is found in the cytoskeleton. The protein resides in the spindle. The protein localises to the spindle pole. Its subcellular location is the midbody. It localises to the cell membrane. Its function is as follows. Plays a role as a regulator of Rho activity during cytokinesis. May play a role in junctional plaques. In Mus musculus (Mouse), this protein is Plakophilin-4 (Pkp4).